A 157-amino-acid polypeptide reads, in one-letter code: Protein Smg homolog (157 aa).

Belongs to the Smg family.

This chain is Protein Smg homolog, found in Photobacterium profundum (strain SS9).